A 1209-amino-acid polypeptide reads, in one-letter code: Neural cell adhesion molecule L1-like protein (1209 aa).

A signal peptide spans 1-25; that stretch reads MMELPLCGRGLILSLIFLLLKLSAA. Residues 26–1083 lie on the Extracellular side of the membrane; sequence EIPLSVQQVP…LYDDISTQGW (1058 aa). Ig-like C2-type domains lie at 35–124 and 128–223; these read PTIV…EEIE and PGVP…MKLT. Disulfide bonds link C57/C109 and C153/C204. N87 is a glycosylation site (N-linked (GlcNAc...) asparagine). N-linked (GlcNAc...) asparagine glycosylation is found at N225 and N299. Ig-like C2-type domains are found at residues 235-328, 331-417, 423-510, and 515-607; these read PKLL…VTVE, PRWK…ANID, PLIK…ANLD, and TKLR…TQVT. 4 cysteine pairs are disulfide-bonded: C262/C310, C352/C401, C445/C494, and C536/C591. The N-linked (GlcNAc...) asparagine glycan is linked to N476. The DGEA motif lies at 555-558; that stretch reads DGEA. N-linked (GlcNAc...) asparagine glycosylation is found at N562 and N580. 4 consecutive Fibronectin type-III domains span residues 614–709, 714–807, 812–914, and 918–1015; these read PPGN…TPPA, NPQN…SGED, APVI…TPEG, and QPSF…LGEG. The segment at 696 to 717 is disordered; sequence HASLPSDHHETPPAAPDKNPQN. 4 N-linked (GlcNAc...) asparagine glycosylation sites follow: N767, N822, N945, and N1027. The helical transmembrane segment at 1084–1104 threads the bilayer; the sequence is FIGLMCAIALLTLILLTICFV. The Cytoplasmic portion of the chain corresponds to 1105–1209; that stretch reads KRNRGGKYSV…SSTATFPLRA (105 aa). Residues 1115–1133 are compositionally biased toward basic and acidic residues; that stretch reads KEKEDLHPDPEVQSAKDET. Residues 1115–1170 are disordered; that stretch reads KEKEDLHPDPEVQSAKDETFGEYSDSDEKPLKGSLRSLNRNMQPTESADSLVEYGE. Phosphoserine is present on residues S1148, S1161, and S1181. A compositionally biased stretch (polar residues) spans 1150-1162; the sequence is RSLNRNMQPTESA. The FIG[AQ]Y motif lies at 1182 to 1186; that stretch reads FIGAY.

It belongs to the immunoglobulin superfamily. L1/neurofascin/NgCAM family. As to quaternary structure, may interact with L1CAM. May interact with ITGB1/ITGA1 heterodimer and ITGB1/ITGA2 heterodimer as well as with ANK3. Post-translationally, cleavage by metalloprotease ADAM8 in the extracellular part generates 2 soluble forms (125 kDa and 165 kDa) in vitro and is inhibited by metalloprotease inhibitors. In brain extracts, these two soluble forms are also present and are dramatically reduced in mice lacking ADAM8. Cleaved by BACE1. In terms of processing, N-glycosylated. Contains N-linked oligosaccharides with a sulfated carbohydrate structure type HNK-1 (SO4-3-GlcUABeta1,3GalBeta1,4GlcNAc). O-glycosylated. As to expression, expressed in the brain, in the cerebellum and in the spinal cord. Detected in the retina and the optic nerve. Expressed in neurons and glial cells in the central nervous system and by Schwann cells in the peripheral nervous system.

It localises to the cell membrane. It is found in the secreted. The protein resides in the extracellular space. Its subcellular location is the extracellular matrix. Extracellular matrix and cell adhesion protein that plays a role in nervous system development and in synaptic plasticity. Both soluble and membranous forms promote neurite outgrowth of cerebellar and hippocampal neurons and suppress neuronal cell death. Plays a role in neuronal positioning of pyramidal neurons as well as in regulation of both the number of interneurons and the efficacy of GABAergic synapses. May play a role in regulating cell migration in nerve regeneration and cortical development. Potentiates integrin-dependent cell migration towards extracellular matrix proteins. Recruits ANK3 to the plasma membrane. This is Neural cell adhesion molecule L1-like protein (Chl1) from Mus musculus (Mouse).